The following is a 512-amino-acid chain: Cytochrome P450 monooxygenase adrA (512 aa).

Residues 12 to 32 form a helical membrane-spanning segment; it reads FEPVSLVGLVLLSGLFLLLTA. Residues asparagine 86, asparagine 149, and asparagine 210 are each glycosylated (N-linked (GlcNAc...) asparagine). Cysteine 453 contacts heme.

Belongs to the cytochrome P450 family. Requires heme as cofactor.

Its subcellular location is the membrane. Its pathway is secondary metabolite biosynthesis; terpenoid biosynthesis. Functionally, cytochrome P450 monooxygenase; part of the gene cluster that mediates the biosynthesis of andrastins, meroterpenoid compounds that exhibit inhibitory activity against ras farnesyltransferase, suggesting that they could be promising leads for antitumor agents. The first step of the pathway is the synthesis of 3,5-dimethylorsellinic acid (DMOA) by the polyketide synthase adrD via condensation of one acetyl-CoA starter unit with 3 malonyl-CoA units and 2 methylations. DMAO is then converted to farnesyl-DMAO by the prenyltransferase adrG. The methyltransferase adrK catalyzes the methylation of the carboxyl group of farnesyl-DMAO to farnesyl-DMAO methyl ester which is further converted to epoxyfarnesyl-DMAO methyl ester by the FAD-dependent monooxygenase adrH. The terpene cyclase adrI then catalyzes the carbon skeletal rearrangement to generate the andrastin E, the first compound in the pathway having the andrastin scaffold, with the tetracyclic ring system. The post-cyclization tailoring enzymes adrF, adrE, adrJ, and adrA, are involved in the conversion of andrastin E into andrastin A. The short chain dehydrogenase adrF is responsible for the oxidation of the C-3 a hydroxyl group of andrastin E to yield the corresponding ketone, andrastin D. The ketoreductase adrE stereoselectively reduces the carbonyl moiety to reverse the stereochemistry of the C-3 position to yield andrastin F. The acetyltransferase adrJ is the acetyltransferase that attaches the acetyl group to the C-3 hydroxyl group of andrastin F to yield andrastin C. Finally, the cytochrome P450 monooxygenase adrA catalyzes two sequential oxidation reactions of the C-23 methyl group, to generate the corresponding alcohol andrastin B, and aldehyde andrastin A. This is Cytochrome P450 monooxygenase adrA from Penicillium rubens (strain ATCC 28089 / DSM 1075 / NRRL 1951 / Wisconsin 54-1255) (Penicillium chrysogenum).